A 462-amino-acid chain; its full sequence is UDP-N-acetylmuramate--L-alanine ligase (462 aa).

117-123 (GTHGKTT) contributes to the ATP binding site.

Belongs to the MurCDEF family.

The protein localises to the cytoplasm. It catalyses the reaction UDP-N-acetyl-alpha-D-muramate + L-alanine + ATP = UDP-N-acetyl-alpha-D-muramoyl-L-alanine + ADP + phosphate + H(+). Its pathway is cell wall biogenesis; peptidoglycan biosynthesis. In terms of biological role, cell wall formation. In Streptomyces coelicolor (strain ATCC BAA-471 / A3(2) / M145), this protein is UDP-N-acetylmuramate--L-alanine ligase.